We begin with the raw amino-acid sequence, 125 residues long: Histone H2A (125 aa).

Residues 1–18 (MSGRGKGGKAKAKAKSRS) show a composition bias toward basic residues. Residues 1 to 21 (MSGRGKGGKAKAKAKSRSSRA) are disordered. The residue at position 2 (serine 2) is an N-acetylserine. Glutamine 104 bears the N5-methylglutamine mark.

It belongs to the histone H2A family. The nucleosome is a histone octamer containing two molecules each of H2A, H2B, H3 and H4 assembled in one H3-H4 heterotetramer and two H2A-H2B heterodimers. The octamer wraps approximately 147 bp of DNA.

The protein resides in the nucleus. Its subcellular location is the chromosome. Core component of nucleosome. Nucleosomes wrap and compact DNA into chromatin, limiting DNA accessibility to the cellular machineries which require DNA as a template. Histones thereby play a central role in transcription regulation, DNA repair, DNA replication and chromosomal stability. DNA accessibility is regulated via a complex set of post-translational modifications of histones, also called histone code, and nucleosome remodeling. The sequence is that of Histone H2A from Mytilus californianus (California mussel).